An 806-amino-acid chain; its full sequence is MVHFKNCPDPSLNANSQSHPEFSSELEHIKTRMQNFIKHSVTDQNIEVTDARVTAEGEVTSLLKERLDKEYYRLLSKITREVNVADFGAVPDGRDNTEAFRKAIGNGRVKVHVPAGEYLVQGIKLPSWTTIVGQGKGITVIKLHEDTPAHEWVITNDDYQNGNRNIFVQGMSLDWNPSRQCGVRNPGGQFSSCLTFAKVEYGWIKDVEAINAGLHGIDITSPTYDHLPDTDWTKDGSRYIWIDNCVTYGSGDDGITTHYSEYIFISNCHSGNPRGTEFAEGVSNSNGIEIDDGSRHVWLLNNFTSGNIRGVEVKAHELWPASQNVHIIGHISYRDVRAFDLRHIGHHQITDPESTTAYDVTLIDCSAVEPVFNSLYDAVTPRALVISAYKNVNVSGFTAIGDPDYDYKENPVVALQYRSQNITINGIKIRGFKKAGVDINLSGGSNKTDYIKISNFDIYKSAPKGISIGGGLYNVNILNGTMITDNGTVAIQSPNNQATILGVQSEGYSVAASIKGQTYQQVPINLKGGIQLATTSGFAVNQTSAVIAGTGDITARGERNAVISSSGGSSTEGSRALIASSNNAHIRGNQASRTILSSENIILEEPYTVAGGHQSIKWLLDSVRGNGTFAGAISSSLGGYGEYFESSTGQLIHTGTIVTLRGEKIVPANVGDYMLGVISETSAFISGASSFVWQGRYLTNEFGGFIYETVTDEESGELIRVPKQNPDYDTALEANYHSRAARDEWHVVGLVGQHYVRIDETVNQGDYLTAHNGIGTKATEGSWKVMKITSAYTSEKGYGIALTVIK.

The interval 1–23 (MVHFKNCPDPSLNANSQSHPEFS) is disordered. Over residues 12 to 21 (LNANSQSHPE) the composition is skewed to polar residues. 6 PbH1 repeats span residues 199–221 (VEYGWIKDVEAINAGLHGIDITS), 237–259 (SRYIWIDNCVTYGSGDDGITTHY), 260–292 (SEYIFISNCHSGNPRGTEFAEGVSNSNGIEIDD), 294–315 (SRHVWLLNNFTSGNIRGVEVKA), 419–441 (SQNITINGIKIRGFKKAGVDINL), and 448–470 (TDYIKISNFDIYKSAPKGISIGG).

The sequence is that of Putative phage-related protein YobO (yobO) from Bacillus subtilis (strain 168).